The sequence spans 454 residues: MNRGETLDSIPTDLILDILSRLPTKSIARFHCVSKLWSSMLASQDFTRLFVNRSSSNPRLLLGIVRGGEWSFYSSPQPKNPYEKSSLEVAADFHMKLSEIKQHQHHGTSYAFGLIYLRTVWMSKEGNYEVCVICKPSTGQYYAILPPQPSGIFGDLGFDPIGKQFKVLVLNILDNHYILTLGTENDKWRSIQSSLRYRPCGQSPICINGVLYYIAYDTQDSSNDVIGCFDVRFEKFKFFHVNHDMVKCFFELINYKDKLGGFPLELSMWVLEDLEKEEWSKYAYTLKPDNNVVKVNYNLSFVGVTTRGEIVLAKMYACKPFYVFYYNPENNTLLSVEIQGVGEDSEWFSNYQRVYVFVEHVKDLHQFDNTKTSINLPEQKRKPTSISISSKYDDHVRTTLISSRKNQQVTTVSRPQQDRRTTNKFSALCLLVMKNSQVSKPDCFSWSSATMLYL.

Residues 4-53 form the F-box domain; it reads GETLDSIPTDLILDILSRLPTKSIARFHCVSKLWSSMLASQDFTRLFVNR.

In Arabidopsis thaliana (Mouse-ear cress), this protein is F-box protein At1g67130.